The following is a 141-amino-acid chain: Nucleoside diphosphate kinase (141 aa).

The ATP site is built by Lys11, Phe59, Arg87, Thr93, Arg104, and Asn114. His117 serves as the catalytic Pros-phosphohistidine intermediate.

This sequence belongs to the NDK family. In terms of assembly, homotetramer. It depends on Mg(2+) as a cofactor.

It is found in the cytoplasm. It catalyses the reaction a 2'-deoxyribonucleoside 5'-diphosphate + ATP = a 2'-deoxyribonucleoside 5'-triphosphate + ADP. The enzyme catalyses a ribonucleoside 5'-diphosphate + ATP = a ribonucleoside 5'-triphosphate + ADP. Functionally, major role in the synthesis of nucleoside triphosphates other than ATP. The ATP gamma phosphate is transferred to the NDP beta phosphate via a ping-pong mechanism, using a phosphorylated active-site intermediate. In Delftia acidovorans (strain DSM 14801 / SPH-1), this protein is Nucleoside diphosphate kinase.